Here is a 337-residue protein sequence, read N- to C-terminus: Probable cytosolic iron-sulfur protein assembly protein CIAO1 homolog (337 aa).

WD repeat units lie at residues 15 to 54 (DDTS…DSKM), 65 to 104 (SHTR…FAEV), 109 to 148 (GHES…DFSV), 154 to 193 (PHTQ…WVTQ), 199 to 238 (CHVG…SKSA), 253 to 292 (NTRW…ESPV), and 301 to 337 (RHEL…ELEI).

This sequence belongs to the WD repeat CIA1 family.

Essential component of the cytosolic iron-sulfur (Fe/S) protein assembly machinery. Required for the maturation of extramitochondrial Fe/S proteins. The protein is Probable cytosolic iron-sulfur protein assembly protein CIAO1 homolog of Caenorhabditis elegans.